Consider the following 76-residue polypeptide: ATP synthase subunit 9, mitochondrial (76 aa).

Met1 carries the post-translational modification N-formylmethionine. 2 helical membrane passes run 14-34 (LASIGLVGAGIGIAIVFAALI) and 52-72 (ILGFALSEATGLFALMIAFLL).

In terms of assembly, F-type ATP synthases have 2 components, the catalytic core F(1) and the membrane-embedded component F(0), linked together by a central stalk and a peripheral stalk. The central stalk, also called rotor shaft, is often seen as part of F(1). The peripheral stalk is seen as part of F(0). F(0) contains the membrane channel next to the rotor. F-type ATP synthases form dimers but each monomer functions independently in ATP generation. The dimer consists of 17 different polypeptides: ATP1 (subunit alpha, 3 molecules per monomer, part of F(1)), ATP2 (subunit beta, 3 copies per monomer, part of F(1)), ATP3 (subunit gamma, part of the central stalk), ATP4 (subunit b, part of the peripheral stalk), ATP5/OSCP (subunit 5/OSCP, part of the peripheral stalk), ATP6 (subunit a, part of the peripheral stalk), ATP7 (subunit d, part of the peripheral stalk), ATP8 (subunit 8, part of the peripheral stalk), OLI1 (subunit c, part of the rotor, 10 molecules per monomer), ATP14 (subunit h, part of the peripheral stalk), ATP15 (subunit epsilon, part of the central stalk), ATP16 (subunit delta, part of the central stalk), ATP17 (subunit f, part of the peripheral stalk), ATP18 (subunit i/j, part of the peripheral stalk), ATP19 (subunit k, dimer-specific, at interface between monomers), ATP20 (subunit g, at interface between monomers), TIM11 (subunit e, at interface between monomers).

It is found in the mitochondrion inner membrane. Functionally, mitochondrial membrane ATP synthase (F(1)F(0) ATP synthase or Complex V) produces ATP from ADP in the presence of a proton gradient across the membrane which is generated by electron transport complexes of the respiratory chain. F-type ATP synthases consist of two structural domains, F(1) - containing the extramembraneous catalytic core, and F(0) - containing the membrane proton channel, linked together by a central stalk and a peripheral stalk. During catalysis, ATP synthesis in the catalytic domain of F(1) is coupled via a rotary mechanism of the central stalk subunits to proton translocation. Part of the complex F(0) domain. A homomeric c-ring of 10 OLI1/ATP9 subunits is part of the complex rotary element. The protein is ATP synthase subunit 9, mitochondrial of Yarrowia lipolytica (strain CLIB 122 / E 150) (Yeast).